The following is a 317-amino-acid chain: Carbonic anhydrase 5B, mitochondrial (317 aa).

The transit peptide at 1–33 directs the protein to the mitochondrion; sequence MAVMNHLRVILQVSSSTLPWRRCWVPRLVPRRS. In terms of domain architecture, Alpha-carbonic anhydrase spans 37–296; that stretch reads YTCTYRTRNR…LMNRTVRSSF (260 aa). Positions 130, 132, and 155 each coordinate Zn(2+). 235 to 236 lines the substrate pocket; sequence TT.

This sequence belongs to the alpha-carbonic anhydrase family. The cofactor is Zn(2+). As to expression, expressed in the heart, liver, lung, kidney, testis, and skeletal muscle (at protein level).

The protein localises to the mitochondrion. It carries out the reaction hydrogencarbonate + H(+) = CO2 + H2O. Functionally, mitochondrial carbonic anhydrase that catalyzes the reversible conversion of carbon dioxide to bicarbonate/HCO3. The protein is Carbonic anhydrase 5B, mitochondrial (Ca5b) of Mus musculus (Mouse).